The following is a 127-amino-acid chain: Cold-regulated protein 1 (127 aa).

Residues 39 to 127 form a disordered region; it reads ARGPPPSPAP…WTRPRMARAR (89 aa). Residues 85–101 are compositionally biased toward basic residues; that stretch reads SRRRRRRRATRRARSRM. Positions 102–121 are enriched in low complexity; the sequence is PRTTPWRAPRAPARAWWTRP.

The sequence is that of Cold-regulated protein 1 from Hordeum vulgare (Barley).